The sequence spans 77 residues: Small ribosomal subunit protein bS18 (77 aa).

This sequence belongs to the bacterial ribosomal protein bS18 family. In terms of assembly, part of the 30S ribosomal subunit. Forms a tight heterodimer with protein bS6.

Functionally, binds as a heterodimer with protein bS6 to the central domain of the 16S rRNA, where it helps stabilize the platform of the 30S subunit. The protein is Small ribosomal subunit protein bS18 of Bacillus thuringiensis subsp. konkukian (strain 97-27).